The sequence spans 354 residues: MNTASDIDYARYDHIRPILWTGEALQLLDQRKLPFVVEHVVCHDSDEVAASIHALTVRGAPAIGIAAAWGVVLAARDVQAADGAHALQQLEPALQRLNASRPTAVNLAWALARMRRCLSAAGADWKALLEAEAQAIAEEDLAANRHMGALGAGLIEAGSGVLTHCNTGSLATAGFGTALGVIRAGMAQHRIARVFAGETRPWLQGARLTVWELQQDGIDATLIADSAASHLMKTGAVQWVIVGADRICANGDTANKIGTYQLAIAARHHGVKFMVVAPSSTVDMETVDGSQIEIEQRDPGELYGVGGTRTVAEGIAAWNPVFDVTPGELIDAIVTERGVILNPTAGNMRAAFGG.

Substrate-binding positions include 58 to 60 (RGA), Arg-101, and Gln-204. Catalysis depends on Asp-245, which acts as the Proton donor. 255-256 (NK) is a substrate binding site.

It belongs to the eIF-2B alpha/beta/delta subunits family. MtnA subfamily.

It catalyses the reaction 5-(methylsulfanyl)-alpha-D-ribose 1-phosphate = 5-(methylsulfanyl)-D-ribulose 1-phosphate. The protein operates within amino-acid biosynthesis; L-methionine biosynthesis via salvage pathway; L-methionine from S-methyl-5-thio-alpha-D-ribose 1-phosphate: step 1/6. Functionally, catalyzes the interconversion of methylthioribose-1-phosphate (MTR-1-P) into methylthioribulose-1-phosphate (MTRu-1-P). The polypeptide is Methylthioribose-1-phosphate isomerase (Stenotrophomonas maltophilia (strain R551-3)).